A 547-amino-acid chain; its full sequence is CTP synthase (547 aa).

Residues 1 to 265 are amidoligase domain; the sequence is MARYIFITGG…DQAVLDAFDI (265 aa). Ser13 is a CTP binding site. Ser13 serves as a coordination point for UTP. Residues 14–19 and Asp71 contribute to the ATP site; that span reads SLGKGL. Mg(2+)-binding residues include Asp71 and Glu139. CTP-binding positions include 146–148, 186–191, and Lys222; these read DIE and KTKPTQ. Residues 186 to 191 and Lys222 each bind UTP; that span reads KTKPTQ. The Glutamine amidotransferase type-1 domain occupies 291–546; the sequence is KVAIVGKYTQ…IRAAKENSRL (256 aa). Residue Gly353 coordinates L-glutamine. Cys380 functions as the Nucleophile; for glutamine hydrolysis in the catalytic mechanism. L-glutamine is bound by residues 381–384, Glu404, and Arg474; that span reads LGMQ. Residues His519 and Glu521 contribute to the active site.

This sequence belongs to the CTP synthase family. In terms of assembly, homotetramer.

The enzyme catalyses UTP + L-glutamine + ATP + H2O = CTP + L-glutamate + ADP + phosphate + 2 H(+). It catalyses the reaction L-glutamine + H2O = L-glutamate + NH4(+). The catalysed reaction is UTP + NH4(+) + ATP = CTP + ADP + phosphate + 2 H(+). Its pathway is pyrimidine metabolism; CTP biosynthesis via de novo pathway; CTP from UDP: step 2/2. Allosterically activated by GTP, when glutamine is the substrate; GTP has no effect on the reaction when ammonia is the substrate. The allosteric effector GTP functions by stabilizing the protein conformation that binds the tetrahedral intermediate(s) formed during glutamine hydrolysis. Inhibited by the product CTP, via allosteric rather than competitive inhibition. In terms of biological role, catalyzes the ATP-dependent amination of UTP to CTP with either L-glutamine or ammonia as the source of nitrogen. Regulates intracellular CTP levels through interactions with the four ribonucleotide triphosphates. This is CTP synthase from Roseobacter denitrificans (strain ATCC 33942 / OCh 114) (Erythrobacter sp. (strain OCh 114)).